A 367-amino-acid polypeptide reads, in one-letter code: MRLLPLFLMVTLAASGCGIVESKKIDYKSSNKLPTLEIPPDLVAPTADNRYAIPDTEGSGTATLSTYSAERKAAPSGTPSLLPAQDKARIERAGTQRWLVVQATPQQVWPVIKDFWQENGFIVNLESPETGVIETDWAENRAKIPQDVIRRTLGKVLDGLYSTAERDKFRTRIEAGSGGTEIYLSHRGMMEVYATEGKDKTVWQPRPADPELEAEMLRRLMLRFGVEENRAQTLLTAKQTPDQARVIRDAGGSLLEMDEGFDRAWRRVGLALDRVGFAVEDRDRSKGTYFVRYIDPDADNASKRDEGMFAKLAFWRSKKDQASPQLQIVVDEAGEGKSRVRVAGGEGRAADAATQNRIINLLHKELK.

The first 16 residues, 1–16 (MRLLPLFLMVTLAASG), serve as a signal peptide directing secretion. Residue C17 is the site of N-palmitoyl cysteine attachment. Residue C17 is the site of S-diacylglycerol cysteine attachment.

Belongs to the BamC family. As to quaternary structure, part of the Bam complex.

The protein resides in the cell outer membrane. Its function is as follows. Part of the outer membrane protein assembly complex, which is involved in assembly and insertion of beta-barrel proteins into the outer membrane. The chain is Outer membrane protein assembly factor BamC from Thiobacillus denitrificans (strain ATCC 25259 / T1).